The primary structure comprises 335 residues: Deoxyhypusine hydroxylase (335 aa).

HEAT-like PBS-type repeat units lie at residues 71–97 (LKHE…VAKD), 104–130 (CRHE…LRDN), 200–233 (LRYR…GLKD), 238–264 (FRHE…ALSN), and 271–298 (VRHE…FLND). 4 residues coordinate Fe cation: His-73, Glu-74, His-106, and Glu-107. His-240, Glu-241, His-273, and Glu-274 together coordinate Fe cation.

Belongs to the deoxyhypusine hydroxylase family. Requires Fe(2+) as cofactor.

The protein resides in the cytoplasm. Its subcellular location is the nucleus. It catalyses the reaction [eIF5A protein]-deoxyhypusine + AH2 + O2 = [eIF5A protein]-hypusine + A + H2O. It functions in the pathway protein modification; eIF5A hypusination. Catalyzes the hydroxylation of the N(6)-(4-aminobutyl)-L-lysine intermediate to form hypusine, an essential post-translational modification only found in mature eIF-5A factor. In Aspergillus fumigatus (strain ATCC MYA-4609 / CBS 101355 / FGSC A1100 / Af293) (Neosartorya fumigata), this protein is Deoxyhypusine hydroxylase (lia1).